We begin with the raw amino-acid sequence, 140 residues long: Sex-regulated protein janus-B (140 aa).

A substrate-binding site is contributed by arginine 42. The active-site Proton acceptor is histidine 69. 110-112 is a binding site for substrate; sequence SRT.

Belongs to the janus family.

Functionally, janA and janB regulate somatic sex differentiation. This Drosophila erecta (Fruit fly) protein is Sex-regulated protein janus-B (janB).